Reading from the N-terminus, the 616-residue chain is FAD-linked oxidoreductase cheF (616 aa).

In terms of domain architecture, FAD-binding PCMH-type spans 160–344; it reads NQGLVSPWYV…LSMTVRVEPA (185 aa).

This sequence belongs to the oxygen-dependent FAD-linked oxidoreductase family. It depends on FAD as a cofactor.

It participates in secondary metabolite biosynthesis. FAD-linked oxidoreductase; part of the gene cluster that mediates the biosynthesis of chaetoglobosin A which has a unique inhibitory activity against actin polymerization in mammalian cells. Chaetoglobosin A and its intermediates are involved in the morphological differentiation of C.globosum. The first step of the pathway is the synthesis of prochaetoglobosin I via condensation of one acetyl-CoA, 8 malonyl-CoA, and a L-tryptophan molecule by the PKS-NRPS hybrid synthetase cheA, followed by reduction of backbone double bond to install desired geometry by the enoyl reductase cheB. Further multiple oxidation steps performed by the cytochrome P450 monooxygenases cheE and cheG, as well as by the FAD-linked oxidoreductase cheF, lead to the formation of chaetoglobosin A. Depending on the order of action of these reductases, distinct intermediates can be identified. Within the pathway, the cytochrome P450 monooxygenase cheE catalyzes a stereospecific epoxidation on prochaetoglobosin I, cytoglobosin D, and chaetoglobosin J intermediates. The FAD-linked oxidoreductase cheF performs dehydrogenation of the C-20 hydroxyl groups in the 20-dihyrochaetoglobosin A and cytoglobosin D intermediates. Finally, the cytochrome P450 monooxygenase cheG can catalyze the stereospecific dihydroxylation of prochaetoglobosin I and prochaetoglobosin IV at C-19 and C-20, respectively. The Diels-Alderase cheD may play a role in the post-PKS-NRPS biosynthetic steps catalyzing Diels-Alder cyclization. This chain is FAD-linked oxidoreductase cheF, found in Chaetomium globosum (strain ATCC 6205 / CBS 148.51 / DSM 1962 / NBRC 6347 / NRRL 1970) (Soil fungus).